Consider the following 457-residue polypeptide: Probable xyloglucan 6-xylosyltransferase 3 (457 aa).

The disordered stretch occupies residues 1 to 40 (MGKEDGFRTQKRVSTASSAAAGVLPTTMASGGVRRPPPRG). Residues 1-51 (MGKEDGFRTQKRVSTASSAAAGVLPTTMASGGVRRPPPRGRQIQKTFNNVK) lie on the Cytoplasmic side of the membrane. Residues 52 to 71 (MTILCGFVTILVLRGTIGIN) form a helical; Signal-anchor for type II membrane protein membrane-spanning segment. Topologically, residues 72–457 (FGTSDADVVN…TTPLKIEARS (386 aa)) are lumenal. N115 and N431 each carry an N-linked (GlcNAc...) asparagine glycan.

It belongs to the glycosyltransferase 34 family.

It is found in the golgi apparatus membrane. The enzyme catalyses Transfers an alpha-D-xylosyl residue from UDP-D-xylose to a glucose residue in xyloglucan, forming an alpha-(1-&gt;6)-D-xylosyl-D-glucose linkage.. Functionally, probable xyloglucan xylosyltransferase involved in the biosynthesis of xyloglucan. The polypeptide is Probable xyloglucan 6-xylosyltransferase 3 (Arabidopsis thaliana (Mouse-ear cress)).